The chain runs to 334 residues: Protein translocase subunit SecF (334 aa).

The next 6 membrane-spanning stretches (helical) occupy residues 18 to 38, 144 to 164, 168 to 190, 195 to 217, 258 to 278, and 279 to 299; these read VAAG…AVTG, GAAM…AIRF, FGLA…IKIF, SLTV…IIIF, ATLA…WVMA, and FGVV…LLWI.

It belongs to the SecD/SecF family. SecF subfamily. In terms of assembly, forms a complex with SecD. Part of the essential Sec protein translocation apparatus which comprises SecA, SecYEG and auxiliary proteins SecDF. Other proteins may also be involved.

The protein localises to the cell inner membrane. Its function is as follows. Part of the Sec protein translocase complex. Interacts with the SecYEG preprotein conducting channel. SecDF uses the proton motive force (PMF) to complete protein translocation after the ATP-dependent function of SecA. The chain is Protein translocase subunit SecF from Gemmatimonas aurantiaca (strain DSM 14586 / JCM 11422 / NBRC 100505 / T-27).